Reading from the N-terminus, the 227-residue chain is PKHD-type hydroxylase BPSS1206 (227 aa).

The Fe2OG dioxygenase domain occupies 78–178; sequence KVFPPLFNRY…RVASFFWIQS (101 aa). Fe cation is bound by residues His-96, Asp-98, and His-159. Arg-169 contacts 2-oxoglutarate.

Fe(2+) serves as cofactor. Requires L-ascorbate as cofactor.

The sequence is that of PKHD-type hydroxylase BPSS1206 from Burkholderia pseudomallei (strain K96243).